The following is a 118-amino-acid chain: Ig heavy chain V region X24 (118 aa).

Positions 1 to 111 constitute an Ig-like domain; the sequence is EVKLLESGGG…GYFDYWGQGT (111 aa).

This chain is Ig heavy chain V region X24, found in Mus musculus (Mouse).